A 647-amino-acid polypeptide reads, in one-letter code: Sialidase (647 aa).

Positions 1–37 (MTANPYLRRLPRRRAVSFLLAPALAAATVAGASPAQA) are cleaved as a signal peptide. Arg-68 is a binding site for substrate. The active-site Proton acceptor is Asp-92. BNR repeat units follow at residues 102–113 (RRSTDGGRTWGE), 175–186 (ATSTDGGLTWSH), and 239–250 (VYSDDHGRTWRA). The Nucleophile role is filled by Glu-260. Position 276 (Arg-276) interacts with substrate. 2 BNR repeats span residues 287 to 298 (AVSTDGGHSYGP) and 348 to 359 (RMSCDDGQTWPV). The active-site Nucleophile is Tyr-370. The 151-residue stretch at 496–646 (TFTVTVGLLD…AVAELEVEGQ (151 aa)) folds into the F5/8 type C domain.

It belongs to the glycosyl hydrolase 33 family.

It is found in the secreted. The catalysed reaction is Hydrolysis of alpha-(2-&gt;3)-, alpha-(2-&gt;6)-, alpha-(2-&gt;8)- glycosidic linkages of terminal sialic acid residues in oligosaccharides, glycoproteins, glycolipids, colominic acid and synthetic substrates.. Functionally, to release sialic acids for use as carbon and energy sources for this non-pathogenic bacterium while in pathogenic microorganisms, sialidases have been suggested to be pathogenic factors. In Micromonospora viridifaciens, this protein is Sialidase (nedA).